An 878-amino-acid chain; its full sequence is Enoyl-CoA isomerase/hydratase claC (878 aa).

Residues 541 to 561 (VGPASTEATSPVVEPSTMESD) are disordered. Substrate is bound by residues 677–681 (AGADL) and Gly724.

This sequence belongs to the enoyl-CoA hydratase/isomerase family.

It participates in secondary metabolite biosynthesis. Functionally, enoyl-CoA isomerase/hydratase; part of the cla gene cluster that produces clavatol and ortho-quinone methide. The clavatol biosynthesis cluster cla and the terrestric acid cluster tra are both involved in the production of peniphenones and penilactones. The non-reducing PKS claF is responsible for the formation of clavatol from successive condensations of 3 malonyl-CoA units, presumably with a simple acetyl-CoA starter unit, and 2 methylation steps. The esterase claE probably collaborates with claF by catalyzing the hydrolysis of ACP-bound acyl intermediates to free the ACP from stalled intermediates. The clavatol oxidase claD then converts clavatol to hydroxyclavatol. Spontaneous dehydration of hydroxyclavatol leads to the accumulation of the highly active ortho-quinone methide. On the other hand, the PKS-NRPS hybrid traA is involved in the formation of crustosic acid, with the help of traB and traD. The polyketide synthase module (PKS) of traA is responsible for the synthesis of the polyketide backbone via the condensation of an acetyl-CoA starter unit with 3 malonyl-CoA units. The downstream nonribosomal peptide synthetase (NRPS) module then amidates the carboxyl end of the polyketide with L-malic acid. Because traA lacks a designated enoylreductase (ER) domain, the required activity is provided the enoyl reductase traG. Crustosic acid undergoes decarboxylation and isomerization to the terrestric acid, catalyzed by the 2-oxoglutarate-dependent dioxygenase traH. Both acids are further converted to the 2 gamma-butyrolactones (R)-5-methyltetronic acid and (S)-5-carboxylmethyltetronic acid, with involvement of the cytochrome P450 monooxygenase claJ. Spontaneous addition of the methide to these gamma-butyrolactones leads to peniphenone D and penilactone D, which undergo again stereospecific attacking by methide to give penilactones A and B. The function of the enoyl-CoA isomerase/hydratase claC has not been investigated yet. The polypeptide is Enoyl-CoA isomerase/hydratase claC (Penicillium crustosum (Blue mold fungus)).